The sequence spans 190 residues: Large ribosomal subunit protein uL6 (190 aa).

The protein belongs to the universal ribosomal protein uL6 family.

The protein is Large ribosomal subunit protein uL6 (RpL9) of Drosophila melanogaster (Fruit fly).